A 443-amino-acid polypeptide reads, in one-letter code: Chromosome partition protein MukF (443 aa).

A leucine-zipper region spans residues L209–I237.

It belongs to the MukF family. As to quaternary structure, interacts, and probably forms a ternary complex, with MukE and MukB via its C-terminal region. The complex formation is stimulated by calcium or magnesium. It is required for an interaction between MukE and MukB.

The protein resides in the cytoplasm. It is found in the nucleoid. Its function is as follows. Involved in chromosome condensation, segregation and cell cycle progression. May participate in facilitating chromosome segregation by condensation DNA from both sides of a centrally located replisome during cell division. Not required for mini-F plasmid partitioning. Probably acts via its interaction with MukB and MukE. Overexpression results in anucleate cells. It has a calcium binding activity. The chain is Chromosome partition protein MukF from Haemophilus ducreyi (strain 35000HP / ATCC 700724).